A 451-amino-acid chain; its full sequence is tRNA modification GTPase MnmE (451 aa).

(6S)-5-formyl-5,6,7,8-tetrahydrofolate is bound by residues R28, E85, and K124. The TrmE-type G domain occupies 220-373 (GLYTVLVGPP…LKTRLRTLLL (154 aa)). Residue N230 coordinates K(+). GTP contacts are provided by residues 230–235 (NVGKSS), 249–255 (TDVPGTT), and 274–277 (DTAG). Residue S234 coordinates Mg(2+). T249, V251, and T254 together coordinate K(+). Residue T255 coordinates Mg(2+). K451 is a binding site for (6S)-5-formyl-5,6,7,8-tetrahydrofolate.

This sequence belongs to the TRAFAC class TrmE-Era-EngA-EngB-Septin-like GTPase superfamily. TrmE GTPase family. In terms of assembly, homodimer. Heterotetramer of two MnmE and two MnmG subunits. K(+) is required as a cofactor.

It localises to the cytoplasm. Exhibits a very high intrinsic GTPase hydrolysis rate. Involved in the addition of a carboxymethylaminomethyl (cmnm) group at the wobble position (U34) of certain tRNAs, forming tRNA-cmnm(5)s(2)U34. In Xylella fastidiosa (strain 9a5c), this protein is tRNA modification GTPase MnmE.